The following is a 1258-amino-acid chain: uncharacterized protein (1258 aa).

Residues 55 to 93 form a WD 1 repeat; sequence ELASEILGVCWQENGVLAAGISEGTWKRFLAGKQAINAE. Positions 112–128 are enriched in basic and acidic residues; that stretch reads GGRTKERKDTGTSRQEK. Residues 112-138 are disordered; that stretch reads GGRTKERKDTGTSRQEKFLSSSHPHTD. WD repeat units follow at residues 640–679, 682–721, 724–763, 766–807, 809–849, 850–889, 892–931, 934–975, 976–1017, 1019–1059, 1060–1101, 1103–1143, 1144–1183, and 1186–1227; these read ETLGNILSAAFSPEGQLLATCDTDCHVRVWEVKSGKLLLI, GHSNWVRFVVFSPDGEILASCGADENVKLWSVRDGVCIKT, GHEHEVFSVAFHPDGETLASASGDKTIKLWDIQDGTCLQT, GHTD…RTLK, HTGW…KTYI, GHTNSVYSIAYSPDSKILVSGSGDRTIKLWDCQTHICIKT, GHTNEVCSVAFSPDGQTLACVSLDQSVRLWNCRTGQCLKA, GNTD…SSLE, GHTD…QILL, HTDW…KTLS, EHSD…GILR, HSNR…KTLT, GHTNWVFDIAFSPDGKILASASHDQTVRIWDVNTGKCHHI, and GHTH…QILR.

This is an uncharacterized protein from Nostoc sp. (strain PCC 7120 / SAG 25.82 / UTEX 2576).